A 290-amino-acid chain; its full sequence is Enoyl-CoA hydratase, mitochondrial (290 aa).

The N-terminal 27 residues, 1 to 27, are a transit peptide targeting the mitochondrion; the sequence is MAALRVLLSCVRGPLRPPVRCPAWRPF. Thr46 carries the phosphothreonine modification. Residue 98-101 coordinates substrate; sequence ADIK. Position 101 is an N6-acetyllysine; alternate (Lys101). Lys101 is modified (N6-succinyllysine; alternate). Ser114 is subject to Phosphoserine. Lys115 carries the N6-acetyllysine; alternate modification. At Lys115 the chain carries N6-succinyllysine; alternate. Residue Lys118 is modified to N6-acetyllysine. Gly141 is a binding site for substrate. Lys204 is modified (N6-succinyllysine). An N6-acetyllysine modification is found at Lys211.

Belongs to the enoyl-CoA hydratase/isomerase family. In terms of assembly, homohexamer; dimer of trimers. In terms of tissue distribution, liver, fibroblast, muscle. Barely detectable in spleen and kidney.

It is found in the mitochondrion matrix. The catalysed reaction is a (3S)-3-hydroxyacyl-CoA = a (2E)-enoyl-CoA + H2O. The enzyme catalyses a (3E)-enoyl-CoA = a 4-saturated (2E)-enoyl-CoA. It catalyses the reaction (3E)-hexenoyl-CoA = (2E)-hexenoyl-CoA. It carries out the reaction (3S)-3-hydroxybutanoyl-CoA = (2E)-butenoyl-CoA + H2O. The catalysed reaction is 3-hydroxyisovaleryl-CoA = 3-methylbut-2-enoyl-CoA + H2O. The enzyme catalyses 3-hydroxypropanoyl-CoA = acryloyl-CoA + H2O. It catalyses the reaction 3-hydroxybutanoyl-CoA = (2E)-butenoyl-CoA + H2O. It carries out the reaction 2-methylpropenoyl-CoA + H2O = (S)-3-hydroxyisobutanoyl-CoA. The catalysed reaction is (3S)-hydroxyhexanoyl-CoA = (2E)-hexenoyl-CoA + H2O. The enzyme catalyses (3S)-hydroxydecanoyl-CoA = (2E)-decenoyl-CoA + H2O. The protein operates within lipid metabolism; fatty acid beta-oxidation. In terms of biological role, converts unsaturated trans-2-enoyl-CoA species ((2E)-enoyl-CoA) to the corresponding (3S)-3hydroxyacyl-CoA species through addition of a water molecule to the double bond. Catalyzes the hydration of medium- and short-chained fatty enoyl-CoA thioesters from 4 carbons long (C4) up to C16. Has high substrate specificity for crotonyl-CoA ((2E)-butenoyl-CoA) and moderate specificity for acryloyl-CoA, 3-methylcrotonyl-CoA (3-methyl-(2E)-butenoyl-CoA) and methacrylyl-CoA ((2E)-2-methylpropenoyl-CoA). Can bind tiglyl-CoA (2-methylcrotonoyl-CoA), but hydrates only a small amount of this substrate. Plays a key role in the beta-oxidation spiral of short- and medium-chain fatty acid oxidation. At a lower rate than the hydratase reaction, catalyzes the isomerase reaction of trans-3-enoyl-CoA species (such as (3E)-hexenoyl-CoA) to trans-2-enoyl-CoA species (such as (2E)-hexenoyl-CoA), which are subsequently hydrated to 3(S)-3-hydroxyacyl-CoA species (such as (3S)-hydroxyhexanoyl-CoA). In Homo sapiens (Human), this protein is Enoyl-CoA hydratase, mitochondrial.